The sequence spans 330 residues: Ketol-acid reductoisomerase (NADP(+)) (330 aa).

Residues 3–184 enclose the KARI N-terminal Rossmann domain; sequence LSVYYDKDID…GGGRMGVLET (182 aa). NADP(+) contacts are provided by residues 26–29, Ser52, and Ser54; that span reads YGTQ. Residue His109 is part of the active site. Gly135 provides a ligand contact to NADP(+). The region spanning 185 to 329 is the KARI C-terminal knotted domain; the sequence is SFKEECESDL…EILRTPFNHE (145 aa). Asp193, Glu197, Glu229, and Glu233 together coordinate Mg(2+). Ser254 provides a ligand contact to substrate.

It belongs to the ketol-acid reductoisomerase family. The cofactor is Mg(2+).

It catalyses the reaction (2R)-2,3-dihydroxy-3-methylbutanoate + NADP(+) = (2S)-2-acetolactate + NADPH + H(+). The enzyme catalyses (2R,3R)-2,3-dihydroxy-3-methylpentanoate + NADP(+) = (S)-2-ethyl-2-hydroxy-3-oxobutanoate + NADPH + H(+). It participates in amino-acid biosynthesis; L-isoleucine biosynthesis; L-isoleucine from 2-oxobutanoate: step 2/4. It functions in the pathway amino-acid biosynthesis; L-valine biosynthesis; L-valine from pyruvate: step 2/4. Its function is as follows. Involved in the biosynthesis of branched-chain amino acids (BCAA). Catalyzes an alkyl-migration followed by a ketol-acid reduction of (S)-2-acetolactate (S2AL) to yield (R)-2,3-dihydroxy-isovalerate. In the isomerase reaction, S2AL is rearranged via a Mg-dependent methyl migration to produce 3-hydroxy-3-methyl-2-ketobutyrate (HMKB). In the reductase reaction, this 2-ketoacid undergoes a metal-dependent reduction by NADPH to yield (R)-2,3-dihydroxy-isovalerate. This chain is Ketol-acid reductoisomerase (NADP(+)), found in Helicobacter acinonychis (strain Sheeba).